A 182-amino-acid polypeptide reads, in one-letter code: Peptide methionine sulfoxide reductase MsrA (182 aa).

Residue Cys13 is part of the active site.

It belongs to the MsrA Met sulfoxide reductase family.

The catalysed reaction is L-methionyl-[protein] + [thioredoxin]-disulfide + H2O = L-methionyl-(S)-S-oxide-[protein] + [thioredoxin]-dithiol. The enzyme catalyses [thioredoxin]-disulfide + L-methionine + H2O = L-methionine (S)-S-oxide + [thioredoxin]-dithiol. Its function is as follows. Has an important function as a repair enzyme for proteins that have been inactivated by oxidation. Catalyzes the reversible oxidation-reduction of methionine sulfoxide in proteins to methionine. The sequence is that of Peptide methionine sulfoxide reductase MsrA from Mycobacterium bovis (strain ATCC BAA-935 / AF2122/97).